The sequence spans 249 residues: Proteasome activator complex subunit 1 (249 aa).

The tract at residues 60 to 102 is disordered; it reads PLDIPVPDPVKEKEKEERKKQQEKEDKDEKKKGEDEDKGPPCG. Positions 68–98 are enriched in basic and acidic residues; that stretch reads PVKEKEKEERKKQQEKEDKDEKKKGEDEDKG.

It belongs to the PA28 family. Heterodimer of PSME1 and PSME2, which forms a hexameric ring. PSME1 can form homoheptamers.

In terms of biological role, implicated in immunoproteasome assembly and required for efficient antigen processing. The PA28 activator complex enhances the generation of class I binding peptides by altering the cleavage pattern of the proteasome. This chain is Proteasome activator complex subunit 1 (PSME1), found in Sus scrofa (Pig).